A 320-amino-acid polypeptide reads, in one-letter code: MKTESEVGHHMASSTLNVDAFRDYLETQLKRLPPLPDVEQISPRVIRVLGQNPGEFTLQGTNTYIVGTGRSRLIIDTGQGSPQWIENVVFLLESMGIILSHVLLTHWHGDHTGGVADLIKSYPHLTTAIYKNSPARDQNNIIDGQSFSVEGATVRALHTPGHAHDHMCFVLVEENAMFTGDNILGHGTTAVEELGPIMSSWRRMLTENCERGYPGHGQLIHNLNHKITEQLASKVRRENLVLDALRCIRGQQGPQMAGRRMSINPKQLVILVHGKGINENVSTLVLEPFLIETLRKLAADGIVGFEICNGEKRWFPVQTV.

Residues histidine 106, histidine 108, aspartate 110, and histidine 111 each contribute to the Zn(2+) site. The active-site Proton donor/acceptor is aspartate 110.

The protein belongs to the metallo-beta-lactamase superfamily. Zn(2+) is required as a cofactor.

It functions in the pathway secondary metabolite biosynthesis. Its function is as follows. Lactamase-like protein; part of the gene cluster that mediates the biosynthesis of dibenzodioxocinones such as pestalotiollide B, a novel class of inhibitors against cholesterol ester transfer protein (CEPT). The biosynthesis initiates from condensation of acetate and malonate units catalyzed by the non-reducing PKS pks8/GME11356. Pks8/GME11356 lacks a thioesterase (TE) domain, which is important to the cyclizing of the third ring of atrochrysone carboxylic acid, and the esterase GME11355 might play the role of TE and catalyzes the cyclization reaction of the C ring. The lactamase-like protein GME11357 (or other beta-lactamases in Pestalotiopsis microspora) probably hydrolyzes the thioester bond between the ACP of pks8/GME11356 and the intermediate to release atrochrysone carboxylic acid, which is spontaneously dehydrates to form endocrocin anthrone. Endocrocin anthrone is further converted to emodin via the endocrocin intermediate. Emodin is then oxidized by several enzymes such as the Baeyer-Villiger oxidase GME11358, the oxidoreductase GME11367, the short chain dehydrogenase/reductase GME11373, as well as by other oxidoreductases from the cluster, to modify the A and C rings and open the B ring, and finally yield monodictyphenone. The prenyltransferase GME11375 may catalyze the addition reaction between the C5 side chains and the carbon bone of dibenzodioxocinones. The remaining biochemical reactions to the final product dibenzodioxocinones should be methylation catalyzed by methyltransferase GME11366 and reduction and lactonization reaction catalyzed by a series of oxidordeuctases. The protein is Lactamase-like protein GME11357 of Pestalotiopsis microspora.